Consider the following 170-residue polypeptide: Lipoprotein signal peptidase (170 aa).

3 helical membrane passes run 12–32, 67–87, and 94–116; these read WYWV…WVLS, WQRW…SVWL, and MWRL…IDRL. Catalysis depends on residues Asp123 and Asp141. A helical membrane pass occupies residues 133-153; it reads HFPAFNIADSAICVGAALIIL.

The protein belongs to the peptidase A8 family.

Its subcellular location is the cell inner membrane. It catalyses the reaction Release of signal peptides from bacterial membrane prolipoproteins. Hydrolyzes -Xaa-Yaa-Zaa-|-(S,diacylglyceryl)Cys-, in which Xaa is hydrophobic (preferably Leu), and Yaa (Ala or Ser) and Zaa (Gly or Ala) have small, neutral side chains.. It functions in the pathway protein modification; lipoprotein biosynthesis (signal peptide cleavage). Functionally, this protein specifically catalyzes the removal of signal peptides from prolipoproteins. The chain is Lipoprotein signal peptidase from Shewanella halifaxensis (strain HAW-EB4).